We begin with the raw amino-acid sequence, 348 residues long: tRNA N6-adenosine threonylcarbamoyltransferase (348 aa).

Positions 118 and 122 each coordinate Fe cation. Substrate is bound by residues 140–144, Asp-173, Gly-186, Asp-190, and Asn-279; that span reads LVSGG. Asp-309 is a binding site for Fe cation.

It belongs to the KAE1 / TsaD family. Fe(2+) serves as cofactor.

The protein resides in the cytoplasm. The catalysed reaction is L-threonylcarbamoyladenylate + adenosine(37) in tRNA = N(6)-L-threonylcarbamoyladenosine(37) in tRNA + AMP + H(+). Functionally, required for the formation of a threonylcarbamoyl group on adenosine at position 37 (t(6)A37) in tRNAs that read codons beginning with adenine. Is involved in the transfer of the threonylcarbamoyl moiety of threonylcarbamoyl-AMP (TC-AMP) to the N6 group of A37, together with TsaE and TsaB. TsaD likely plays a direct catalytic role in this reaction. The chain is tRNA N6-adenosine threonylcarbamoyltransferase from Lactiplantibacillus plantarum (strain ATCC BAA-793 / NCIMB 8826 / WCFS1) (Lactobacillus plantarum).